The chain runs to 463 residues: Glutamate--tRNA ligase 2 (463 aa).

The 'HIGH' region motif lies at 11–21; that stretch reads PSPTGYLHIGG. The 'KMSKS' region motif lies at 240 to 244; sequence KLSKR. Residue Lys-243 coordinates ATP.

This sequence belongs to the class-I aminoacyl-tRNA synthetase family. Glutamate--tRNA ligase type 1 subfamily. In terms of assembly, monomer.

The protein localises to the cytoplasm. The catalysed reaction is tRNA(Glu) + L-glutamate + ATP = L-glutamyl-tRNA(Glu) + AMP + diphosphate. Functionally, catalyzes the attachment of glutamate to tRNA(Glu) in a two-step reaction: glutamate is first activated by ATP to form Glu-AMP and then transferred to the acceptor end of tRNA(Glu). This Campylobacter jejuni (strain RM1221) protein is Glutamate--tRNA ligase 2.